A 499-amino-acid chain; its full sequence is Probable inactive receptor-like protein kinase At3g56050 (499 aa).

An N-terminal signal peptide occupies residues methionine 1–serine 31. The N-linked (GlcNAc...) asparagine glycan is linked to asparagine 14. The Extracellular segment spans residues leucine 32–proline 146. The interval arginine 80–proline 121 is disordered. Asparagine 142 carries an N-linked (GlcNAc...) asparagine glycan. Residues isoleucine 147–phenylalanine 167 form a helical membrane-spanning segment. Over phenylalanine 168 to alanine 499 the chain is Cytoplasmic. Residues glutamate 208–threonine 474 form the Protein kinase domain.

It localises to the cell membrane. This Arabidopsis thaliana (Mouse-ear cress) protein is Probable inactive receptor-like protein kinase At3g56050.